Consider the following 544-residue polypeptide: MSLVACECPPGPGLEPEPCSRARSQACMYLEQIRNRVATGTADVTKRDYLVDAATQIHLALERDVSEDYEAAFNHYQNGVDVLLRGVHVDPNKERREAVKLKITKYLRRAEEIFNCHLQRTLGSGASPNTGFSSLRLRPIRTLSSALEQLKGCRVVGIIKKVQVVQDPATGGTFIVKSLPRCHMVSRERLTIIPHGVPYMTKLLRYFVSEDSIFLHLEHVQGGTLWSHLLSQDHFQYSGLNSGSVQEKSQAQLSTRLSLMTPAELTPGHTLRQNRIPMEPPRTSQSLPPALQLQKEADAEPSSRPSAVFSSDPTEAPCGHSHSQVRRAGQSSNPAPTQRLHWVREGADRVLGAYGRGRGRNPPSANRASLGSGRAAWSLREGQVKQWAAEMLLALEALHQQGVLCRDLNPQNLLLDQAGHIQLTYFGQWSEVEPRCSQEAVDCLYSAPEVGGISELTEACDWWSYGSLLYELLTGMALSQSHPSGFQAHTQLQLPEWLSHPAASLLTELLQFEPQRRLGAGGGGTSRLKSHPFFSTIQWSRLMG.

The MIT domain occupies Val87–Asn115. In terms of domain architecture, Protein kinase spans Ser145–Phe534. Residues Lys151 to Ile159 and Lys177 contribute to the ATP site. Disordered regions lie at residues Pro262 to Arg344 and Ala353 to Ser372. Residues Ser303–Pro313 are compositionally biased toward polar residues. The active-site Proton acceptor is the Asp407.

It belongs to the protein kinase superfamily. Ser/Thr protein kinase family. S6 kinase subfamily.

It carries out the reaction L-seryl-[protein] + ATP = O-phospho-L-seryl-[protein] + ADP + H(+). The catalysed reaction is L-threonyl-[protein] + ATP = O-phospho-L-threonyl-[protein] + ADP + H(+). The polypeptide is Ribosomal protein S6 kinase-like 1 (Rps6kl1) (Mus musculus (Mouse)).